The primary structure comprises 377 residues: Chaperone MoxR1 (377 aa).

The interval 1–33 is disordered; that stretch reads MTSAGGFPAGAGGYQTPGGHSASPAHEAPPGGA. Positions 7–16 are enriched in gly residues; that stretch reads FPAGAGGYQT. Low complexity predominate over residues 19 to 33; that stretch reads GHSASPAHEAPPGGA. 78–85 provides a ligand contact to ATP; the sequence is GVPGVAKT.

The protein belongs to the MoxR family. As to quaternary structure, interacts with RipA. Interacts with host Toll-like receptor 4 (TLR4).

Displays ATP-enhanced chaperone activity. Required for the proper folding of the peptidoglycan endopeptidase RipA and its secretion through the TAT secretion system. In vitro, prevents thermal aggregation of MalZ protein and protects the functional activity of the restriction enzyme NdeI from thermal inactivation. Its function is as follows. Could be a moonlighting protein that uses a multipronged approach to dampen host-directed immunity for efficient replication, survival and pathogenesis. Can enhance virulence by inhibiting autophagy and apoptosis, and disrupting cellular bioenergetics. Binds and activates host TLR4 on the surface of macrophage cells, leading to the activation of the host NFKB and MAPK signaling cascades and enhanced secretion of proinflammatory cytokines. Inhibits autophagic flux via activation of PI3K-AKT-MTOR-ULK1 signaling cascade and represses apoptosis via inhibiting protooncogene c-FOS and MAPK JNK1/2. Also induces robust disruption of cellular bioenergetics by metabolic reprogramming to rewire the citric acid cycle intermediates for its benefit. The sequence is that of Chaperone MoxR1 from Mycobacterium tuberculosis (strain ATCC 25618 / H37Rv).